The primary structure comprises 108 residues: UPF0102 protein Sfri_0388 (108 aa).

The protein belongs to the UPF0102 family.

The sequence is that of UPF0102 protein Sfri_0388 from Shewanella frigidimarina (strain NCIMB 400).